Reading from the N-terminus, the 652-residue chain is MHPGGGPSRAERLELGLGRERPAKAIFLHRRPGEGGGRERCLRCGHVCVRRGPGPREAVPSGRPRPDTLTPPWVRQRAVTGTFCASWTPLRNRRAQRMATDMQRKRSSECLDGTLTPSDGQSMERAESPTPGMAQGMEPGAGQEGAMFVHARSYEDLTESEDGAASGDSHKEGTRGPPPLPTDMRQISQDFSELSTQLTGVARDLQEEMLPGSSEDWLEPPGAVGRPATEPPREGTTEGDEEDATEAWRLHQKHVFVLSEAGKPVYSRYGSEEALSSTMGVMVALVSFLEADKNAIRSIHADGYKVVFVRRSPLVLVAVARTRQSAQELAQELLYIYYQILSLLTGAQLSHIFQQKQNYDLRRLLSGSERITDNLLQLMARDPSFLMGAARCLPLAAAVRDTVSASLQQARARSLVFSILLARNQLVALVRRKDQFLHPIDLHLLFNLISSSSSFREGEAWTPVCLPKFNAAGFFHAHISYLEPDTDLCLLLVSTDREDFFAVSDCRRRFQERLRKRGAHLALREALRTPYYSVAQVGIPDLRHFLYKSKSSGLFTSPEIEAPYTSEEEQERLLGLYQYLHSRAHNASRPLKTIYYTGPNENLLAWVTGAFELYMCYSPLGTKASAVSAIHKLMRWIRKEEDRLFILTPLTY.

The interval 102–141 is disordered; that stretch reads MQRKRSSECLDGTLTPSDGQSMERAESPTPGMAQGMEPGA. Phosphoserine occurs at positions 128 and 153. The residue at position 158 (Thr-158) is a Phosphothreonine. A disordered region spans residues 158–185; it reads TESEDGAASGDSHKEGTRGPPPLPTDMR. Ser-188 carries the phosphoserine modification. The segment at 211–245 is disordered; that stretch reads PGSSEDWLEPPGAVGRPATEPPREGTTEGDEEDAT.

It belongs to the MON1/SAND family. Interacts with CCZ1. Found in a complex with RMC1, CCZ1, MON1A and MON1B. The MON1A-CCZ1B complex interacts with RIMOC1. The MON1A-CCZ1B complex interacts with RAB7A and this interaction is enhanced in the presence of RIMOC1.

Plays an important role in membrane trafficking through the secretory apparatus. Not involved in endocytic trafficking to lysosomes. Acts in concert with CCZ1, as a guanine exchange factor (GEF) for RAB7, promotes the exchange of GDP to GTP, converting it from an inactive GDP-bound form into an active GTP-bound form. The protein is Vacuolar fusion protein MON1 homolog A (MON1A) of Homo sapiens (Human).